A 314-amino-acid chain; its full sequence is Malate dehydrogenase (314 aa).

NAD(+) contacts are provided by residues 11–16 (GSGNIG) and aspartate 35. Substrate-binding residues include arginine 84 and arginine 90. NAD(+) contacts are provided by residues asparagine 97 and 120 to 122 (ITN). Substrate-binding residues include asparagine 122 and arginine 153. Histidine 177 acts as the Proton acceptor in catalysis.

It belongs to the LDH/MDH superfamily. MDH type 3 family.

The catalysed reaction is (S)-malate + NAD(+) = oxaloacetate + NADH + H(+). In terms of biological role, catalyzes the reversible oxidation of malate to oxaloacetate. This Rickettsia bellii (strain OSU 85-389) protein is Malate dehydrogenase.